The following is a 185-amino-acid chain: Elongation factor P (185 aa).

It belongs to the elongation factor P family.

The protein localises to the cytoplasm. The protein operates within protein biosynthesis; polypeptide chain elongation. Involved in peptide bond synthesis. Stimulates efficient translation and peptide-bond synthesis on native or reconstituted 70S ribosomes in vitro. Probably functions indirectly by altering the affinity of the ribosome for aminoacyl-tRNA, thus increasing their reactivity as acceptors for peptidyl transferase. The chain is Elongation factor P from Halalkalibacterium halodurans (strain ATCC BAA-125 / DSM 18197 / FERM 7344 / JCM 9153 / C-125) (Bacillus halodurans).